The primary structure comprises 225 residues: Ribonuclease 3 (225 aa).

Residues 7–129 (IPRLCRTLGY…IIGAIYLDSE (123 aa)) form the RNase III domain. Glu-42 provides a ligand contact to Mg(2+). The active site involves Asp-46. The Mg(2+) site is built by Asp-115 and Glu-118. Glu-118 is a catalytic residue. The 71-residue stretch at 155-225 (DPKTLLQEHL…AAQVLELMKK (71 aa)) folds into the DRBM domain.

The protein belongs to the ribonuclease III family. Homodimer. Mg(2+) is required as a cofactor.

The protein localises to the cytoplasm. It catalyses the reaction Endonucleolytic cleavage to 5'-phosphomonoester.. Functionally, digests double-stranded RNA. Involved in the processing of primary rRNA transcript to yield the immediate precursors to the large and small rRNAs (23S and 16S). Processes some mRNAs, and tRNAs when they are encoded in the rRNA operon. Processes pre-crRNA and tracrRNA of type II CRISPR loci if present in the organism. This is Ribonuclease 3 from Shewanella halifaxensis (strain HAW-EB4).